The sequence spans 262 residues: MDVNASRALANVYDLPDDFFPQIDDLVRDAKDALEPYWKAETIKKHVLIATHFVDLIEDFWQTTQGMSQIADALRAVIPPTTVPVPEGFLITHSEAEEIPLNDLFSNQEERIVNFQPDYPITARIHTHLRVYTKLNEQALDKARRLLWWHYNCLLWGEATVTNYISRLRTWLSTPEKYRGKDAPTIEAITRPIQVAQGGRNQTKGTRKPRGLEPRRRKVKTTVVYGRRRSKSRGRRSSPSQRAGSPLPRNRGNQTRSPSPRE.

A disordered region spans residues 183 to 262 (APTIEAITRP…NQTRSPSPRE (80 aa)). Over residues 205–236 (GTRKPRGLEPRRRKVKTTVVYGRRRSKSRGRR) the composition is skewed to basic residues. The Bipartite nuclear localization signal motif lies at 215–233 (RRRKVKTTVVYGRRRSKSR). A phosphoserine; by host mark is found at Ser232 and Ser245. The segment covering 251 to 262 (RGNQTRSPSPRE) has biased composition (polar residues). An RNA binding region spans residues 254 to 260 (QTRSPSP).

It belongs to the avihepadnavirus core antigen family. As to quaternary structure, homodimerizes, then multimerizes.

The protein resides in the virion. It localises to the host cytoplasm. Its function is as follows. Self assembles to form an icosahedral capsid. Most capsid appear to be large particles with an icosahedral symmetry of T=4 and consist of 240 copies of capsid protein, though a fraction forms smaller T=3 particles consisting of 180 capsid proteins. Entering capsid are transported along microtubules to the nucleus. Phosphorylation of the capsid is thought to induce exposure of nuclear localization signal in the C-terminal portion of the capsid protein that allows binding to the nuclear pore complex via the importin (karyopherin-) alpha and beta. Capsids are imported in intact form through the nuclear pore into the nuclear basket, where it probably binds NUP153. Only capsids that contain the mature viral genome can release the viral DNA and capsid protein into the nucleoplasm. Immature capsids get stucked in the basket. Capsids encapsulate the pre-genomic RNA and the P protein. Pre-genomic RNA is reverse transcribed into DNA while the capsid is still in the cytoplasm. The capsid can then either be directed to the nucleus, providing more genome for transcription, or bud through the endoplasmic reticulum to provide new virions. This chain is Capsid protein (C), found in Ardeidae (herons).